Here is a 1558-residue protein sequence, read N- to C-terminus: Arginine-glutamic acid dipeptide repeats protein (1558 aa).

The segment covering 1–36 has biased composition (basic and acidic residues); sequence MTADKDKDKDKEKDRDRDRDRERDKRDKARESENAR. Positions 1–90 are disordered; that stretch reads MTADKDKDKD…KKKSRYERTD (90 aa). Phosphoserine is present on residues S53 and S56. Positions 74–85 are enriched in basic residues; it reads KSRKKPPKKKSR. The 181-residue stretch at 103-283 folds into the BAH domain; it reads VVYRPGDCVY…PETRRLNSTQ (181 aa). T120 bears the Phosphothreonine mark. Phosphoserine occurs at positions 142 and 304. The 104-residue stretch at 284–387 folds into the ELM2 domain; sequence GEIRVGPSHQ…KALQRLVKKP (104 aa). Residues 391 to 443 enclose the SANT domain; it reads LIEKCWTEDEVKRFVKGLRQYGKNFFRIRKELLPSKETGELITFYYYWKKTPE. The tract at residues 464–495 is disordered; sequence TRTASTPVNTPSRPPSSEFLDLSSASEDDFDS. The span at 465 to 474 shows a compositional bias: polar residues; the sequence is RTASTPVNTP. Positions 479 to 488 are enriched in low complexity; the sequence is SSEFLDLSSA. The GATA-type zinc finger occupies 507–532; sequence CRHCFTTTSKDWHHGGRENILLCTDC. The tract at residues 542–1125 is disordered; the sequence is LPPIEKPVDP…PSHASQSARF (584 aa). K560 is covalently cross-linked (Glycyl lysine isopeptide (Lys-Gly) (interchain with G-Cter in SUMO2)). A Phosphothreonine modification is found at T593. A phosphoserine mark is found at S594, S600, and S613. Over residues 609-623 the composition is skewed to low complexity; the sequence is SGRNSPSAASTSSND. Over residues 624–640 the composition is skewed to basic and acidic residues; it reads SKAETVKKSAKKVKEEA. K637 is covalently cross-linked (Glycyl lysine isopeptide (Lys-Gly) (interchain with G-Cter in SUMO2)). Residues S642, S656, S675, and S679 each carry the phosphoserine modification. The span at 652–673 shows a compositional bias: basic and acidic residues; that stretch reads EKVASDTEDTDRITSKKTKTQE. The span at 688–708 shows a compositional bias: basic and acidic residues; it reads SDSRSVNDEGSSDPKDIDQDN. Over residues 709–720 the composition is skewed to polar residues; sequence RSTSPSIPSPQD. The segment covering 726–752 has biased composition (low complexity); that stretch reads DSSAQQQMLQAQPPALQAPSGAASAPS. Polar residues predominate over residues 778–792; the sequence is SPATSQPPNQTQSTV. Positions 806–823 are enriched in pro residues; that stretch reads LHPPRLPSPHPPLQPMTA. Composition is skewed to low complexity over residues 824–857, 865–874, and 891–901; these read PPSQ…LLQH, GLPSQPSQGQ, and QLPASQSALQP. The segment covering 902 to 932 has biased composition (pro residues); it reads QQPPREQPLPPAPLAMPHIKPPPTTPIPQLP. The span at 962-972 shows a compositional bias: low complexity; it reads KPLSSLSTHHP. A compositionally biased stretch (polar residues) spans 1012 to 1023; it reads HPTTGLHQVPSQ. Residues 1027–1053 show a composition bias toward pro residues; the sequence is PQHPFVPGGPPPITPPSCPPTSTPPAG. Residues 1054 to 1077 show a composition bias toward low complexity; the sequence is PSSSSQPPCSAAVSSGGSVPGAPS. Residues S1098, S1105, and S1107 each carry the phosphoserine modification. Positions 1098 to 1109 are enriched in pro residues; that stretch reads SPPPPPRSPSPE. T1111 is modified (phosphothreonine). A coiled-coil region spans residues 1148-1203; that stretch reads GSKLAKKREEAIEKAKREAEQKAREEREREKEKEKEREREREREREAERAAKASSS. Residue K1150 is modified to N6-acetyllysine. The segment covering 1154 to 1198 has biased composition (basic and acidic residues); the sequence is KREEAIEKAKREAEQKAREEREREKEKEKEREREREREREAERAA. The disordered stretch occupies residues 1154-1238; the sequence is KREEAIEKAK…TTIAAVPPYI (85 aa). Position 1251 is a phosphotyrosine (Y1251). The residue at position 1258 (S1258) is a Phosphoserine.

Interacts with HDAC1 and ATN1. Interaction with ATN1 is improved when the poly-Gln region of ATN1 is extended. Interacts with FAT1.

It is found in the nucleus. The protein resides in the PML body. Plays a role as a transcriptional repressor during development. May play a role in the control of cell survival. This Mus musculus (Mouse) protein is Arginine-glutamic acid dipeptide repeats protein (Rere).